Here is an 831-residue protein sequence, read N- to C-terminus: Periplasmic nitrate reductase (831 aa).

The segment at residues 1–29 (MKVSRRDFIKQTAIAATASVAGIPLGTEA) is a signal peptide (tat-type signal). The 4Fe-4S Mo/W bis-MGD-type domain maps to 41–97 (LKWSKAPCRFCGTGCGVTVAVRDNKVVATQGDPQCEVNKGLNCVKGYFLSKIMYGQD). Residues cysteine 48, cysteine 51, cysteine 55, and cysteine 83 each coordinate [4Fe-4S] cluster. Mo-bis(molybdopterin guanine dinucleotide) contacts are provided by residues lysine 85, glutamine 152, asparagine 177, cysteine 181, 214-221 (WGSNMAEM), 245-249 (STFTH), 264-266 (QTD), methionine 375, glutamine 379, asparagine 485, 511-512 (SD), lysine 534, aspartate 561, and 721-730 (TGRVLEHWHS). A substrate-binding site is contributed by tryptophan 797. Residues asparagine 805 and lysine 822 each contribute to the Mo-bis(molybdopterin guanine dinucleotide) site.

The protein belongs to the prokaryotic molybdopterin-containing oxidoreductase family. NasA/NapA/NarB subfamily. In terms of assembly, component of the periplasmic nitrate reductase NapAB complex composed of NapA and NapB. [4Fe-4S] cluster serves as cofactor. The cofactor is Mo-bis(molybdopterin guanine dinucleotide). Predicted to be exported by the Tat system. The position of the signal peptide cleavage has not been experimentally proven.

The protein resides in the periplasm. The catalysed reaction is 2 Fe(II)-[cytochrome] + nitrate + 2 H(+) = 2 Fe(III)-[cytochrome] + nitrite + H2O. In terms of biological role, catalytic subunit of the periplasmic nitrate reductase complex NapAB. Receives electrons from NapB and catalyzes the reduction of nitrate to nitrite. The polypeptide is Periplasmic nitrate reductase (Cupriavidus pinatubonensis (strain JMP 134 / LMG 1197) (Cupriavidus necator (strain JMP 134))).